The sequence spans 259 residues: MASQLRLRSALALVTGAGSGIGRAISVRLAAEGAAVAACDLDGAAAQDTVRLLGNPGSEDREPRGKHAAFQADVSEGPAAKRLLEQVQACFFRPPSVVVSCAGITRDEFLLHMSEEDWDRVIAVNLKGTFLVTQAAAQALVSSGGRGSIINISSIVGKVGNIGQTNYASSKAGVIGLTQTAARELGRHGIRCNSVLPGFIATPMTQKMPEKVKDKVTAMIPLGHMGDPEDVADVVAFLASEDSGYITGASVEVSGGLFM.

NAD(+) contacts are provided by residues 13 to 21 and 40 to 41; these read LVTGAGSGI and DL. Ser-58 bears the Phosphoserine mark. Residue Lys-66 is modified to N6-acetyllysine. 72 to 74 is an NAD(+) binding site; that stretch reads ADV. Ser-154 contributes to the substrate binding site. At Lys-158 the chain carries N6-succinyllysine. Tyr-167 functions as the Proton acceptor in the catalytic mechanism. NAD(+)-binding positions include 167 to 171 and 200 to 202; these read YASSK and IAT. N6-succinyllysine is present on Lys-171.

The protein belongs to the short-chain dehydrogenases/reductases (SDR) family. In terms of assembly, heterotetramer with CBR4; contains two molecules of HSD17B8 and CBR4. As to expression, expressed in ovary at protein level.

Its subcellular location is the mitochondrion matrix. The enzyme catalyses a (3R)-3-hydroxyacyl-CoA + NAD(+) = a 3-oxoacyl-CoA + NADH + H(+). The catalysed reaction is 17beta-estradiol + NAD(+) = estrone + NADH + H(+). It carries out the reaction testosterone + NAD(+) = androst-4-ene-3,17-dione + NADH + H(+). It catalyses the reaction 17beta-hydroxy-5alpha-androstan-3-one + NAD(+) = 5alpha-androstan-3,17-dione + NADH + H(+). It functions in the pathway steroid biosynthesis; estrogen biosynthesis. It participates in lipid metabolism; fatty acid biosynthesis. The protein operates within lipid metabolism; mitochondrial fatty acid beta-oxidation. Functionally, required for the solubility and assembly of the heterotetramer 3-ketoacyl-[acyl carrier protein] (ACP) reductase functional complex (KAR or KAR1) that forms part of the mitochondrial fatty acid synthase (mtFAS). Alpha-subunit of the KAR complex that acts as scaffold protein required for the stability of carbonyl reductase type-4 (CBR4, beta-subunit of the KAR complex) and for its 3-ketoacyl-ACP reductase activity, thereby participating in mitochondrial fatty acid biosynthesis. Catalyzes the NAD-dependent conversion of (3R)-3-hydroxyacyl-CoA into 3-ketoacyl-CoA (3-oxoacyl-CoA) with no chain length preference; this enzymatic activity is not needed for the KAR function. Prefers (3R)-3-hydroxyacyl-CoA over (3S)-3-hydroxyacyl-CoA and displays enzymatic activity only in the presence of NAD(+). Cooperates with enoyl-CoA hydratase 1 in mitochondria, together they constitute an alternative route to the auxiliary enzyme pathways for the breakdown of Z-PUFA (cis polyunsaturated fatty acid) enoyl-esters. NAD-dependent 17-beta-hydroxysteroid dehydrogenase with highest activity towards estradiol (17beta-estradiol or E2). Has very low activity towards testosterone and dihydrotestosterone (17beta-hydroxy-5alpha-androstan-3-one). Primarily an oxidative enzyme, it can switch to a reductive mode determined in the appropriate physiologic milieu and catalyze the reduction of estrone (E1) to form biologically active 17beta-estradiol. This is (3R)-3-hydroxyacyl-CoA dehydrogenase (Hsd17b8) from Rattus norvegicus (Rat).